Here is a 206-residue protein sequence, read N- to C-terminus: Flavin reductase (NADPH) (206 aa).

8 residues coordinate NADP(+): glycine 10, threonine 12, glycine 13, asparagine 14, threonine 15, arginine 35, serine 38, and arginine 39. Phosphoserine is present on serine 42. Positions 54, 55, 75, 76, and 78 each coordinate NADP(+). Serine 82 is modified (phosphoserine). Residues methionine 87, cysteine 109, histidine 132, histidine 153, and isoleucine 154 each coordinate NADP(+). Cysteine 109 functions as the S-nitroso-cysteine intermediate; for S-nitroso-CoA-dependent nitrosyltransferase activity in the catalytic mechanism. The active-site S-nitroso-cysteine intermediate; for S-nitroso-CoA-dependent nitrosyltransferase activity is cysteine 188.

Monomer. As to expression, at least expressed in the liver and erythrocyte.

It is found in the cytoplasm. The enzyme catalyses reduced riboflavin + NADP(+) = riboflavin + NADPH + 2 H(+). It catalyses the reaction bilirubin IXbeta + NADP(+) = biliverdin IXbeta + NADPH + H(+). The catalysed reaction is FMNH2 + NAD(+) = FMN + NADH + 2 H(+). It carries out the reaction FMNH2 + NADP(+) = FMN + NADPH + 2 H(+). The enzyme catalyses S-nitroso-CoA + L-cysteinyl-[protein] = S-nitroso-L-cysteinyl-[protein] + CoA. It catalyses the reaction L-cysteinyl-[SCAN] + S-nitroso-CoA = S-nitroso-L-cysteinyl-[SCAN] + CoA. The catalysed reaction is S-nitroso-L-cysteinyl-[SCAN] + L-cysteinyl-[protein] = L-cysteinyl-[SCAN] + S-nitroso-L-cysteinyl-[protein]. Enzyme that can both act as a NAD(P)H-dependent reductase and a S-nitroso-CoA-dependent nitrosyltransferase. Promotes fetal heme degradation during development. Also expressed in adult tissues, where it acts as a regulator of hematopoiesis, intermediary metabolism (glutaminolysis, glycolysis, TCA cycle and pentose phosphate pathway) and insulin signaling. Has a broad specificity oxidoreductase activity by catalyzing the NAD(P)H-dependent reduction of a variety of flavins, such as riboflavin, FAD or FMN, biliverdins, methemoglobin and PQQ (pyrroloquinoline quinone). Contributes to fetal heme catabolism by catalyzing reduction of biliverdin IXbeta into bilirubin IXbeta in the liver. Biliverdin IXbeta, which constitutes the major heme catabolite in the fetus is not present in adult. Does not reduce bilirubin IXalpha. Can also reduce the complexed Fe(3+) iron to Fe(2+) in the presence of FMN and NADPH. Acts as a protein nitrosyltransferase by catalyzing nitrosylation of cysteine residues of target proteins, such as HMOX2, INSR and IRS1. S-nitroso-CoA-dependent nitrosyltransferase activity is mediated via a 'ping-pong' mechanism: BLVRB first associates with both S-nitroso-CoA and protein substrate, nitric oxide group is then transferred from S-nitroso-CoA to Cys-109 and Cys-188 residues of BLVRB and from S-nitroso-BLVRB to the protein substrate. Inhibits insulin signaling by mediating nitrosylation of INSR and IRS1, leading to their inhibition. This is Flavin reductase (NADPH) (BLVRB) from Bos taurus (Bovine).